The following is a 697-amino-acid chain: T-related protein (697 aa).

The tract at residues M1 to G60 is disordered. Gly residues-rich tracts occupy residues V20–S35 and H50–G60. Residues L96 to D264 constitute a DNA-binding region (T-box). Over residues S316–S330 the composition is skewed to low complexity. 2 disordered regions span residues S316–G407 and V462–P488. Residues S337–Y351 are compositionally biased toward polar residues. Low complexity-rich tracts occupy residues S352–S373, Q381–S401, and S469–P488.

The protein localises to the nucleus. Required for the specification of the hindgut and anal pads. This Drosophila melanogaster (Fruit fly) protein is T-related protein (byn).